We begin with the raw amino-acid sequence, 530 residues long: MTAKTAPKVTLWEFFQQLGKTFMLPVALLSFCGIMLGIGSSLSSHDVITLIPVLGNPVLQAIFTWMSKIGSFAFSFLPVMFCIAIPLGLARENKGVAAFAGFIGYAVMNLAVNFWLTNKGILPTTDAAVLKANNIQSILGIQSIDTGILGAVIAGIIVWMLHERFHNIRLPDALAFFGGTRFVPIISSLVMGLVGLVIPLVWPIFAMGISGLGHMINSAGDFGPMLFGTGERLLLPFGLHHILVALIRFTDAGGTQEVCGQTVSGALTIFQAQLSCPTTHGFSESATRFLSQGKMPAFLGGLPGAALAMYHCARPENRHKIKGLLISGLIACVVGGTTEPLEFLFLFVAPVLYVIHALLTGLGFTVMSVLGVTIGNTDGNIIDFVVFGILHGLSTKWYMVPVVAAIWFVVYYVIFRFAITRFNLKTPGRDSEVASSIEKAVAGAPGKSGYNVPAILEALGGADNIVSLDNCITRLRLSVKDMSLVNVQALKDNRAIGVVQLNQHNLQVVIGPQVQSVKDEMAGLMHTVQA.

In terms of domain architecture, PTS EIIC type-1 spans 1-431 (MTAKTAPKVT…FNLKTPGRDS (431 aa)). Transmembrane regions (helical) follow at residues 22–42 (FMLPVALLSFCGIMLGIGSSL), 69–89 (IGSFAFSFLPVMFCIAIPLGL), 96–116 (VAAFAGFIGYAVMNLAVNFWL), 138–158 (ILGIQSIDTGILGAVIAGIIV), 189–209 (LVMGLVGLVIPLVWPIFAMGI), 289–309 (FLSQGKMPAFLGGLPGAALAM), 321–341 (IKGLLISGLIACVVGGTTEPL), 343–363 (FLFLFVAPVLYVIHALLTGLG), 369–389 (VLGVTIGNTDGNIIDFVVFGI), and 399–419 (MVPVVAAIWFVVYYVIFRFAI). One can recognise a PTS EIIB type-1 domain in the interval 449–530 (GYNVPAILEA…MAGLMHTVQA (82 aa)). C471 functions as the Phosphocysteine intermediate; for EIIB activity in the catalytic mechanism.

The protein resides in the cell inner membrane. It carries out the reaction D-maltose(out) + N(pros)-phospho-L-histidyl-[protein] = alpha-maltose 6'-phosphate(in) + L-histidyl-[protein]. In terms of biological role, the phosphoenolpyruvate-dependent sugar phosphotransferase system (sugar PTS), a major carbohydrate active transport system, catalyzes the phosphorylation of incoming sugar substrates concomitantly with their translocation across the cell membrane. This system is involved in maltose transport. MalX can also recognize and transport glucose even though this sugar may not represent the natural substrate of the system. This is PTS system maltose-specific EIICB component from Escherichia coli (strain K12).